The primary structure comprises 428 residues: CinA-like protein (428 aa).

Belongs to the CinA family.

The polypeptide is CinA-like protein (Endomicrobium trichonymphae).